Consider the following 276-residue polypeptide: NAD-capped RNA hydrolase NudC (276 aa).

Arginine 82 is a substrate binding site. 2 residues coordinate Zn(2+): cysteine 112 and cysteine 115. Glutamate 125 contacts substrate. The Zn(2+) site is built by cysteine 130 and cysteine 133. Residue tyrosine 138 coordinates substrate. Residues 139–262 (PRISPSMIVL…SIARYLIDLY (124 aa)) form the Nudix hydrolase domain. The a divalent metal cation site is built by alanine 172, glutamate 188, and glutamate 192. The Nudix box motif lies at 173 to 194 (GFAEPGESAEDCLIREVREEVS). Substrate is bound at residue 206 to 213 (QCWPFPHS). Glutamate 233 is an a divalent metal cation binding site. Residue alanine 255 participates in substrate binding.

It belongs to the Nudix hydrolase family. NudC subfamily. Homodimer. The cofactor is Mg(2+). It depends on Mn(2+) as a cofactor. Requires Zn(2+) as cofactor.

It carries out the reaction a 5'-end NAD(+)-phospho-ribonucleoside in mRNA + H2O = a 5'-end phospho-adenosine-phospho-ribonucleoside in mRNA + beta-nicotinamide D-ribonucleotide + 2 H(+). The enzyme catalyses NAD(+) + H2O = beta-nicotinamide D-ribonucleotide + AMP + 2 H(+). It catalyses the reaction NADH + H2O = reduced beta-nicotinamide D-ribonucleotide + AMP + 2 H(+). Functionally, mRNA decapping enzyme that specifically removes the nicotinamide adenine dinucleotide (NAD) cap from a subset of mRNAs by hydrolyzing the diphosphate linkage to produce nicotinamide mononucleotide (NMN) and 5' monophosphate mRNA. The NAD-cap is present at the 5'-end of some mRNAs and stabilizes RNA against 5'-processing. Has preference for mRNAs with a 5'-end purine. Catalyzes the hydrolysis of a broad range of dinucleotide pyrophosphates. The chain is NAD-capped RNA hydrolase NudC from Pseudomonas fluorescens (strain ATCC BAA-477 / NRRL B-23932 / Pf-5).